The chain runs to 763 residues: ATP-dependent RNA helicase MAK5 (763 aa).

Disordered stretches follow at residues 1-35 and 87-169; these read MVNK…SNNN and DTKI…DNEV. Residues 18-35 are compositionally biased toward low complexity; it reads FKGSSSKGNSKTVKSNNN. Residues 104–114 are compositionally biased toward acidic residues; sequence EIDEDAPENDL. The segment covering 115–127 has biased composition (basic and acidic residues); it reads VEFKNMDDMKDGE. The span at 136 to 160 shows a compositional bias: acidic residues; that stretch reads SEAEAESEAESEEEEEKTGDDEGED. Residues 192-220 carry the Q motif motif; that stretch reads WTEKVGELSFTTLHGLTKLGFNKPTLIQE. The region spanning 223–411 is the Helicase ATP-binding domain; that stretch reads IPMALKGEDI…SHASWKNMKT (189 aa). 236–243 serves as a coordination point for ATP; sequence ASTGSGKT. Residues 352–355 carry the DEAD box motif; the sequence is DEAD. In terms of domain architecture, Helicase C-terminal spans 450-619; it reads QIKESLIECA…DIIMGKKKWQ (170 aa).

It belongs to the DEAD box helicase family. DDX24/MAK5 subfamily.

The protein localises to the nucleus. The protein resides in the nucleolus. It carries out the reaction ATP + H2O = ADP + phosphate + H(+). ATP-binding RNA helicase involved in the biogenesis of 60S ribosomal subunits and is required for the normal formation of 25S and 5.8S rRNAs. In Vanderwaltozyma polyspora (strain ATCC 22028 / DSM 70294 / BCRC 21397 / CBS 2163 / NBRC 10782 / NRRL Y-8283 / UCD 57-17) (Kluyveromyces polysporus), this protein is ATP-dependent RNA helicase MAK5 (MAK5).